We begin with the raw amino-acid sequence, 206 residues long: MARYLGPKLKLSRREGTDLFLKSGVRAIDSKCKLETAPGQHGARKPRLSEYGTQLREKQKVRRIYGVLEKQFRNYYKEAARLKGNTGENLLQLLETRLDNVVYRMGFGATRAESRQLVSHKTVLVNGRVVNIPSFKVSANDVVSIREKSRTQARIKASLEVAAQREKPTWVEVDNTKMEGAFKRLPERSDLSADINEQLIVELYSK.

Residues 96–156 (TRLDNVVYRM…EKSRTQARIK (61 aa)) enclose the S4 RNA-binding domain.

This sequence belongs to the universal ribosomal protein uS4 family. In terms of assembly, part of the 30S ribosomal subunit. Contacts protein S5. The interaction surface between S4 and S5 is involved in control of translational fidelity.

Functionally, one of the primary rRNA binding proteins, it binds directly to 16S rRNA where it nucleates assembly of the body of the 30S subunit. In terms of biological role, with S5 and S12 plays an important role in translational accuracy. The sequence is that of Small ribosomal subunit protein uS4 from Shewanella denitrificans (strain OS217 / ATCC BAA-1090 / DSM 15013).